Reading from the N-terminus, the 533-residue chain is Probable nucleolar protein 5-2 (533 aa).

The Nop domain occupies 281–399 (IAPNLTALVG…LEARLRNLEG (119 aa)). 2 disordered regions span residues 401–433 (DLGRLSGSSKGKPKIEVYNKDKKMGSGGLITPA) and 445–533 (GETS…KSKD). Positions 413–424 (PKIEVYNKDKKM) are enriched in basic and acidic residues. Residues 521-533 (KKDKKEKKKKSKD) are compositionally biased toward basic residues.

The protein belongs to the NOP5/NOP56 family.

Its subcellular location is the nucleus. It localises to the nucleolus. Required for 60S ribosomal subunit biogenesis. The protein is Probable nucleolar protein 5-2 (NOP5-2) of Arabidopsis thaliana (Mouse-ear cress).